We begin with the raw amino-acid sequence, 193 residues long: 3-isopropylmalate dehydratase small subunit (193 aa).

This sequence belongs to the LeuD family. LeuD type 1 subfamily. Heterodimer of LeuC and LeuD.

The catalysed reaction is (2R,3S)-3-isopropylmalate = (2S)-2-isopropylmalate. It functions in the pathway amino-acid biosynthesis; L-leucine biosynthesis; L-leucine from 3-methyl-2-oxobutanoate: step 2/4. Catalyzes the isomerization between 2-isopropylmalate and 3-isopropylmalate, via the formation of 2-isopropylmaleate. In Bacillus thuringiensis subsp. konkukian (strain 97-27), this protein is 3-isopropylmalate dehydratase small subunit.